We begin with the raw amino-acid sequence, 761 residues long: Phosphoribosylformylglycinamidine synthase subunit PurL (761 aa).

The span at 1 to 13 shows a compositional bias: polar residues; sequence MTSRVDTVDNAAS. The tract at residues 1–23 is disordered; the sequence is MTSRVDTVDNAASTPDHPQPFAE. His-57 is a catalytic residue. Positions 60 and 104 each coordinate ATP. Glu-106 serves as a coordination point for Mg(2+). Substrate contacts are provided by residues 107 to 110 and Arg-129; that span reads SHNH. His-108 acts as the Proton acceptor in catalysis. Asp-130 serves as a coordination point for Mg(2+). Position 259 (Gln-259) interacts with substrate. Asp-287 contacts Mg(2+). 331–333 is a binding site for substrate; it reads ESQ. ATP-binding residues include Asn-519 and Gly-556. Asn-557 contacts Mg(2+). Ser-559 contributes to the substrate binding site.

It belongs to the FGAMS family. In terms of assembly, monomer. Part of the FGAM synthase complex composed of 1 PurL, 1 PurQ and 2 PurS subunits.

The protein resides in the cytoplasm. It carries out the reaction N(2)-formyl-N(1)-(5-phospho-beta-D-ribosyl)glycinamide + L-glutamine + ATP + H2O = 2-formamido-N(1)-(5-O-phospho-beta-D-ribosyl)acetamidine + L-glutamate + ADP + phosphate + H(+). The protein operates within purine metabolism; IMP biosynthesis via de novo pathway; 5-amino-1-(5-phospho-D-ribosyl)imidazole from N(2)-formyl-N(1)-(5-phospho-D-ribosyl)glycinamide: step 1/2. Functionally, part of the phosphoribosylformylglycinamidine synthase complex involved in the purines biosynthetic pathway. Catalyzes the ATP-dependent conversion of formylglycinamide ribonucleotide (FGAR) and glutamine to yield formylglycinamidine ribonucleotide (FGAM) and glutamate. The FGAM synthase complex is composed of three subunits. PurQ produces an ammonia molecule by converting glutamine to glutamate. PurL transfers the ammonia molecule to FGAR to form FGAM in an ATP-dependent manner. PurS interacts with PurQ and PurL and is thought to assist in the transfer of the ammonia molecule from PurQ to PurL. The protein is Phosphoribosylformylglycinamidine synthase subunit PurL of Mycobacteroides abscessus (strain ATCC 19977 / DSM 44196 / CCUG 20993 / CIP 104536 / JCM 13569 / NCTC 13031 / TMC 1543 / L948) (Mycobacterium abscessus).